The primary structure comprises 439 residues: Histidine--tRNA ligase (439 aa).

The protein belongs to the class-II aminoacyl-tRNA synthetase family. Homodimer.

The protein localises to the cytoplasm. It carries out the reaction tRNA(His) + L-histidine + ATP = L-histidyl-tRNA(His) + AMP + diphosphate + H(+). In Leptospira interrogans serogroup Icterohaemorrhagiae serovar Lai (strain 56601), this protein is Histidine--tRNA ligase (hisS).